Consider the following 1622-residue polypeptide: Transient receptor potential cation channel subfamily M member 1 (1622 aa).

Disordered stretches follow at residues 1–25, 64–95, 450–490, 618–641, and 822–856; these read MGSM…GSQK, PPLP…KHTQ, LAPP…EVEE, LGME…EEEI, and SKEN…HKKQ. The Cytoplasmic portion of the chain corresponds to 1 to 875; that stretch reads MGSMRKMSSS…CEFYNAPIVK (875 aa). Positions 8–25 are enriched in low complexity; it reads SSSFKRGSIKSSTSGSQK. The span at 70–95 shows a compositional bias: polar residues; that stretch reads APSTTGEDTKQADTQSGKWSVSKHTQ. Over residues 472–483 the composition is skewed to basic residues; it reads GRGKGKGKKKGK. 2 stretches are compositionally biased toward basic and acidic residues: residues 823–832 and 843–853; these read KENEDGKEKE and GSRKGDEENEH. The chain crosses the membrane as a helical span at residues 876 to 896; it reads FWFYTISYLGYLLLFNYVILV. Residues 897–942 are Extracellular-facing; it reads RMDGWPSPQEWIVISYIVSLALEKIREILMSEPGKLSQKIKVWLQE. The helical transmembrane segment at 943–963 threads the bilayer; the sequence is YWNITDLVAISMFMVGAILRL. Topologically, residues 964 to 973 are cytoplasmic; it reads QSQPYMGYGR. The chain crosses the membrane as a helical span at residues 974-994; the sequence is VIYCVDIILWYIRVLDIFGVN. Topologically, residues 995–1006 are extracellular; sequence KYLGPYVMMIGK. A helical membrane pass occupies residues 1007–1027; it reads MMIDMLYFVVIMLVVLMSFGV. The Cytoplasmic segment spans residues 1028-1099; sequence ARQAILHPEE…CIPGAWLTPA (72 aa). The chain crosses the membrane as a helical span at residues 1100-1120; sequence LMACYLLVANILLVNLLIAVF. N-linked (GlcNAc...) asparagine glycosylation occurs at N1121. The Extracellular segment spans residues 1121-1150; sequence NNTFFEVKSISNQVWKFQRYQLIMTFHDRP. The chain crosses the membrane as a helical span at residues 1151–1171; it reads VLPPPMIILSHIYIIIMRLSG. The Cytoplasmic segment spans residues 1172–1622; the sequence is RCRKKREGDQ…QEKRSAETEC (451 aa). The stretch at 1224-1252 forms a coiled coil; that stretch reads DERIRVTSERVENMSMRLEEINERENFMK. Disordered stretches follow at residues 1354–1383, 1389–1408, and 1567–1622; these read EDAK…RSRL, LSTE…EFDP, and CLRS…ETEC. Residues 1613-1622 are compositionally biased toward basic and acidic residues; the sequence is QEKRSAETEC.

This sequence belongs to the transient receptor (TC 1.A.4) family. LTrpC subfamily. TRPM1 sub-subfamily. As to quaternary structure, homodimer. Interacts with TRPM3; the interaction results in the formation of a heteromultimeric cation channel complex that are functionally different from the homomeric channels. Interacts with GPR179. Associates with both guanine nucleotide-binding proteins G(o) and beta-gamma G protein dimer; implicated in directly regulating TRPM1 channel open-state. Expressed in the retina where it localizes on dendritic tips of ON bipolar cells. Specifically, it is expressed in retinal bipolar cells (BPCs) of the ON subtype. Not detected in brain, lung, liver, heart, kidney, spleen or small intestine. Also expressed at high levels in poorly metastatic variants of B16 melanoma and at much reduced levels in highly metastatic variants of B16 melanoma.

It is found in the cell membrane. The protein localises to the endoplasmic reticulum membrane. It localises to the cell projection. Its subcellular location is the axon. It catalyses the reaction Ca(2+)(in) = Ca(2+)(out). The catalysed reaction is Mg(2+)(in) = Mg(2+)(out). It carries out the reaction Mn(2+)(in) = Mn(2+)(out). The enzyme catalyses Ni(2+)(in) = Ni(2+)(out). With respect to regulation, inhibited by extracellular zinc ions. Inhibited by intracellular Mg(2+). Activated by the neuroactive steroid pregnenolone sulfate. Negatively regulated by activation of GRM6 receptors in the ON-bipolar cells. Constitutively open nonselective divalent cation-conducting channels which mediate the influx of Ca(2+), Mg(2+), Mn(2+), Ba(2+), and Ni(2+) into the cytoplasm, leading to membrane depolarization. Impermeable to zinc ions. In addition, forms heteromultimeric ion channels with TRPM3 which are permeable for calcium and zinc ions. Plays an essential role for the depolarizing photoresponse of retinal ON bipolar cells. In the dark, tonic release of glutamate activates the G-protein coupled receptor for glutamate (GRM6), its activation induces the release of G(o) and the beta-gamma G protein dimer. Both subunits can interact and inactivate the TRPM1 channel. A light onset, induces decrease in glutamate release and deactivation of GRM6 leading to channel opening and membrane depolarization. May play a role in metastasis suppression. The chain is Transient receptor potential cation channel subfamily M member 1 from Mus musculus (Mouse).